A 43-amino-acid polypeptide reads, in one-letter code: Protein PsbN (43 aa).

The chain crosses the membrane as a helical span at residues 5–27 (ALVAISISRLLVSFTGYALYTAF).

It belongs to the PsbN family.

The protein resides in the plastid. It localises to the chloroplast thylakoid membrane. Functionally, may play a role in photosystem I and II biogenesis. The chain is Protein PsbN from Bowenia serrulata (Byfield fern).